The following is a 319-amino-acid chain: tRNA uridine(34) hydroxylase (319 aa).

A Rhodanese domain is found at 125 to 219; that stretch reads LDENTVVIDA…YGKDPEVQGD (95 aa). The Cysteine persulfide intermediate role is filled by cysteine 179.

It belongs to the TrhO family.

It carries out the reaction uridine(34) in tRNA + AH2 + O2 = 5-hydroxyuridine(34) in tRNA + A + H2O. Its function is as follows. Catalyzes oxygen-dependent 5-hydroxyuridine (ho5U) modification at position 34 in tRNAs. This chain is tRNA uridine(34) hydroxylase, found in Lactococcus lactis subsp. cremoris (strain MG1363).